Here is a 334-residue protein sequence, read N- to C-terminus: Phosphate acyltransferase (334 aa).

The protein belongs to the PlsX family. In terms of assembly, homodimer. Probably interacts with PlsY.

It localises to the cytoplasm. It carries out the reaction a fatty acyl-[ACP] + phosphate = an acyl phosphate + holo-[ACP]. It functions in the pathway lipid metabolism; phospholipid metabolism. Functionally, catalyzes the reversible formation of acyl-phosphate (acyl-PO(4)) from acyl-[acyl-carrier-protein] (acyl-ACP). This enzyme utilizes acyl-ACP as fatty acyl donor, but not acyl-CoA. This chain is Phosphate acyltransferase, found in Streptococcus thermophilus (strain CNRZ 1066).